Consider the following 569-residue polypeptide: Protein ste7 (569 aa).

Disordered stretches follow at residues 195–219 (APIT…VNSV) and 255–274 (FSVS…SPPI). Low complexity predominate over residues 198–219 (TTSSATHTSQFSTSSSSSVNSV). The span at 264–274 (PQTPISMSPPI) shows a compositional bias: pro residues.

It belongs to the arrestin family.

Has a role in promoting meiosis whereby it is involved in establishing the mating pheromone signaling pathway. It also has a role in suppressing meiosis until the conjugation process is complete. This Schizosaccharomyces pombe (strain 972 / ATCC 24843) (Fission yeast) protein is Protein ste7 (ste7).